Here is a 76-residue protein sequence, read N- to C-terminus: Small ribosomal subunit protein bS18 (76 aa).

It belongs to the bacterial ribosomal protein bS18 family. In terms of assembly, part of the 30S ribosomal subunit. Forms a tight heterodimer with protein bS6.

Functionally, binds as a heterodimer with protein bS6 to the central domain of the 16S rRNA, where it helps stabilize the platform of the 30S subunit. This Methylococcus capsulatus (strain ATCC 33009 / NCIMB 11132 / Bath) protein is Small ribosomal subunit protein bS18.